The primary structure comprises 865 residues: Protein translocase subunit SecA (865 aa).

ATP contacts are provided by residues Gln-85, 103–107 (GEGKT), and Asp-505. Cys-847, Cys-849, Cys-858, and His-859 together coordinate Zn(2+).

This sequence belongs to the SecA family. Monomer and homodimer. Part of the essential Sec protein translocation apparatus which comprises SecA, SecYEG and auxiliary proteins SecDF. Other proteins may also be involved. It depends on Zn(2+) as a cofactor.

The protein localises to the cell membrane. It localises to the cytoplasm. The catalysed reaction is ATP + H2O + cellular proteinSide 1 = ADP + phosphate + cellular proteinSide 2.. In terms of biological role, part of the Sec protein translocase complex. Interacts with the SecYEG preprotein conducting channel. Has a central role in coupling the hydrolysis of ATP to the transfer of proteins into and across the cell membrane, serving as an ATP-driven molecular motor driving the stepwise translocation of polypeptide chains across the membrane. This Lactococcus lactis subsp. cremoris (strain SK11) protein is Protein translocase subunit SecA.